The following is a 237-amino-acid chain: Ribosomal RNA small subunit methyltransferase G (237 aa).

Residues glycine 78, phenylalanine 83, 129-130, and arginine 148 contribute to the S-adenosyl-L-methionine site; that span reads AE.

The protein belongs to the methyltransferase superfamily. RNA methyltransferase RsmG family.

Its subcellular location is the cytoplasm. Functionally, specifically methylates the N7 position of a guanine in 16S rRNA. The polypeptide is Ribosomal RNA small subunit methyltransferase G (Streptococcus pyogenes serotype M3 (strain ATCC BAA-595 / MGAS315)).